We begin with the raw amino-acid sequence, 677 residues long: MPAYDLTAPYTPKGDQPTAIKQLVQGVNGGERYQTLLGATGTGKTFTMANVIAQTGRPALVLAHNKTLAAQLCNELREFFPENAVEYFISYYDYYQPEAYVPVSDTYIAKTASINEEIDMLRHSATRSLFERRDVIVVASISCIYGLGIPSEYLKAAVKFEVGETLNIRSQLRELVNNQYSRNDTEIARGRFRMKGDVLEIGPAYEDRLVRIELFGDEVEAIRYVDPTTGEILQSLETVNIYPAKHFVTPKDRLDSAIGEIRQELRDRLDFLNGEGKLLEAQRLEQRTKYDLEMLGQVGYCNGVENYARHLAGREEGTPPECLIDYFPKDWLLIVDESHVTCSQLQAMYNGDQARKKVLIEHGFRLPSAADNRPLKGEEFWEKAHQTVFVSATPGNWELEVSGGEVAQQVIRPTGVLDPIVEVRPTTGQVDDLLGEIRDRASKQQRVLVTTLTKRMAEDLTDYLAENEVRVRYLHSEIHSIERIEIIQDLRLGEYDVLVGVNLLREGLDLPEVSLVAILDADKEGFLRAERSLIQTIGRAARHVEGVALLYADNMTESMAKAISETERRRKIQQTYNEKHGIVPTAAGKKASNSILSFLELSRKLKQDGPDADLVQVAGKAAQALEEDPDAGLALEALPELIDQLEGKMKEAAKKLDFEDAANLRDRIKQLRQKMAG.

A Helicase ATP-binding domain is found at 25–412 (QGVNGGERYQ…GGEVAQQVIR (388 aa)). ATP is bound at residue 38 to 45 (GATGTGKT). Residues 91 to 114 (YYDYYQPEAYVPVSDTYIAKTASI) carry the Beta-hairpin motif. A Helicase C-terminal domain is found at 429-591 (QVDDLLGEIR…IVPTAAGKKA (163 aa)). Residues 639-674 (PELIDQLEGKMKEAAKKLDFEDAANLRDRIKQLRQK) enclose the UVR domain.

The protein belongs to the UvrB family. As to quaternary structure, forms a heterotetramer with UvrA during the search for lesions. Interacts with UvrC in an incision complex.

It is found in the cytoplasm. In terms of biological role, the UvrABC repair system catalyzes the recognition and processing of DNA lesions. A damage recognition complex composed of 2 UvrA and 2 UvrB subunits scans DNA for abnormalities. Upon binding of the UvrA(2)B(2) complex to a putative damaged site, the DNA wraps around one UvrB monomer. DNA wrap is dependent on ATP binding by UvrB and probably causes local melting of the DNA helix, facilitating insertion of UvrB beta-hairpin between the DNA strands. Then UvrB probes one DNA strand for the presence of a lesion. If a lesion is found the UvrA subunits dissociate and the UvrB-DNA preincision complex is formed. This complex is subsequently bound by UvrC and the second UvrB is released. If no lesion is found, the DNA wraps around the other UvrB subunit that will check the other stand for damage. The polypeptide is UvrABC system protein B (Parasynechococcus marenigrum (strain WH8102)).